The sequence spans 419 residues: Putative competence-damage inducible protein (419 aa).

Belongs to the CinA family.

The chain is Putative competence-damage inducible protein from Streptococcus agalactiae serotype III (strain NEM316).